A 38-amino-acid chain; its full sequence is Photosystem II reaction center protein X 2 (38 aa).

Residues 8–28 form a helical membrane-spanning segment; sequence FLWSLVYGAVVLGLLFGAIVF.

The protein belongs to the PsbX family. Type 1 subfamily. As to quaternary structure, PSII is composed of 1 copy each of membrane proteins PsbA, PsbB, PsbC, PsbD, PsbE, PsbF, PsbH, PsbI, PsbJ, PsbK, PsbL, PsbM, PsbT, PsbX, PsbY, PsbZ, Psb30/Ycf12, peripheral proteins PsbO, CyanoQ (PsbQ), PsbU, PsbV and a large number of cofactors. It forms dimeric complexes.

The protein resides in the cellular thylakoid membrane. Functionally, involved in the binding and/or turnover of quinones at the Q(B) site of photosystem II (PSII). PSII is a light-driven water plastoquinone oxidoreductase, using light energy to abstract electrons from H(2)O, generating a proton gradient subsequently used for ATP formation. In Synechococcus sp. (strain JA-3-3Ab) (Cyanobacteria bacterium Yellowstone A-Prime), this protein is Photosystem II reaction center protein X 2.